Reading from the N-terminus, the 508-residue chain is Abl interactor 1 (508 aa).

Ala2 carries the N-acetylalanine modification. The required for binding to WASF1 stretch occupies residues 18–79 (ALIESYQNLT…NNVLQLLDIQ (62 aa)). The region spanning 45–107 (KALEETKAYT…DIHKEKVARR (63 aa)) is the t-SNARE coiled-coil homology domain. The residue at position 53 (Tyr53) is a Phosphotyrosine. 3 disordered regions span residues 159–290 (KHGN…APPL), 306–375 (APGS…LTPQ), and 388–421 (NIADSPTPPPPPPPDDIPMFDDSPPPPPPPPVDY). Positions 161-175 (GNNQPARTGTLSRTN) are enriched in polar residues. Phosphothreonine is present on residues Thr174 and Thr178. A phosphoserine mark is found at Ser183 and Ser187. At Tyr213 the chain carries Phosphotyrosine; by ABL1. Thr215 carries the phosphothreonine modification. A phosphoserine mark is found at Ser216, Ser222, and Ser225. The span at 222–235 (SQHSPGRTASLNQR) shows a compositional bias: polar residues. Low complexity predominate over residues 248–258 (SRENSGSSSIG). Over residues 278–290 (VPPPSGAPPAPPL) the composition is skewed to pro residues. Positions 307–322 (PGSQYGTMTRQISRHN) are enriched in polar residues. Phosphoserine is present on residues Ser319 and Ser323. Positions 337–347 (PSVTAQFSAQP) are enriched in polar residues. 2 stretches are compositionally biased toward pro residues: residues 393–403 (PTPPPPPPPDD) and 410–419 (SPPPPPPPPV). One can recognise an SH3 domain in the interval 446–505 (NYIEKVVAIYDYTKDKDDELSFMEGAIIYVIKKNDDGWYEGVCNRVTGLFPGNYVESIMH). Phosphotyrosine is present on Tyr455. The residue at position 466 (Ser466) is a Phosphoserine. Thr507 is subject to Phosphothreonine.

The protein belongs to the ABI family. As to quaternary structure, interacts with ABL1, ENAH, STX1A, SNAP25, VAMP2, EPS8, and through its N-terminus with WASF1. Part of a complex consisting of ABI1, STX1A and SNAP25. Part of a complex consisting of ABI1, EPS8 and SOS1. Interacts with SOS1, SOS2, GRB2, SPTA1 and the first SH3 domain of NCK1. Isoform 6 does not interact with NCK1. Component of the WAVE2 complex composed of ABI1, CYFIP1/SRA1, NCKAP1/NAP1 (NCKAP1l/HEM1 in hematopoietic cells) and WASF2/WAVE2. Interacts (via SH3 domain) with SHANK2 and SHANK3, but not SHANK1; the interaction is direct. Interacts with the heterodimer MYC:MAX; the interaction may enhance MYC:MAX transcriptional activity. Interacts with FNBP1L (via the SH3 domain), WASF2, and CDC42, but only in the presence of FNBP1L. In terms of assembly, (Microbial infection) Interacts with human cytomegalovirus/HHV-5 protein UL135. Post-translationally, phosphorylated on tyrosine residues after serum stimulation or induction by v-Abl. Seems to be phosphorylated at Tyr-53 by ABL1, required for nuclear but not for synaptic localization. Widely expressed, with highest expression in brain.

The protein localises to the cytoplasm. The protein resides in the nucleus. Its subcellular location is the cell projection. It localises to the lamellipodium. It is found in the filopodium. The protein localises to the growth cone. The protein resides in the postsynaptic density. Its subcellular location is the cytoskeleton. Functionally, may act in negative regulation of cell growth and transformation by interacting with nonreceptor tyrosine kinases ABL1 and/or ABL2. May play a role in regulation of EGF-induced Erk pathway activation. Involved in cytoskeletal reorganization and EGFR signaling. Together with EPS8 participates in transduction of signals from Ras to Rac. In vitro, a trimeric complex of ABI1, EPS8 and SOS1 exhibits Rac specific guanine nucleotide exchange factor (GEF) activity and ABI1 seems to act as an adapter in the complex. Regulates ABL1/c-Abl-mediated phosphorylation of ENAH. Recruits WASF1 to lamellipodia and there seems to regulate WASF1 protein level. In brain, seems to regulate the dendritic outgrowth and branching as well as to determine the shape and number of synaptic contacts of developing neurons. The chain is Abl interactor 1 from Homo sapiens (Human).